The chain runs to 637 residues: Sodium-dependent phosphate transport protein 2A (637 aa).

Over 1-103 (MMSYSERLGG…LAQVGTKLLK (103 aa)) the chain is Cytoplasmic. Residues Ser-14 and Ser-34 each carry the phosphoserine modification. The helical transmembrane segment at 104–125 (VPLMLAFLYLFVCSLDVLSSAF) threads the bilayer. The Extracellular portion of the chain corresponds to 126 to 145 (QLAGGKVAGDIFKDNAILSN). A helical membrane pass occupies residues 146-163 (PVAGLVVGILVTVLVQSS). Residues 164–165 (ST) are Cytoplasmic-facing. Residues 166 to 185 (STSIIVSMVSSGLLEVSSAI) traverse the membrane as a helical segment. The Extracellular portion of the chain corresponds to 186–345 (PIIMGSNIGT…HIFVDTGLPD (160 aa)). Cystine bridges form between Cys-225/Cys-520 and Cys-306/Cys-334. Asn-298 and Asn-328 each carry an N-linked (GlcNAc...) asparagine glycan. Residues 346–368 (LAVGLILLAGSLVVLCTCLILLV) form a helical membrane-spanning segment. The Cytoplasmic portion of the chain corresponds to 369–410 (KMLNSLLKGQVMSSRRSSTQTDFPAPFTWVTGYFAMVVGASM). A helical transmembrane segment spans residues 411–434 (TFVVQSSSVFTSAITPLIGLGVIS). Over 435-464 (IERAYPLTLGSNIGTTTTAILAALASPREK) the chain is Extracellular. The helical transmembrane segment at 465–485 (LSSSFQIALCHFFFNISGILL) threads the bilayer. Residues 486-511 (WYPLPCTRLPIRMAKALGKRTAKYRW) are Cytoplasmic-facing. Thr-506 carries the post-translational modification Phosphothreonine; by PKC. A helical transmembrane segment spans residues 512–532 (FAVLYLLVCFLLLPSLVFGIS). Topologically, residues 533 to 537 (MAGWQ) are extracellular. Residues 538 to 559 (AMVGVGTPFGALLAFVVLVNVL) form a helical membrane-spanning segment. The Cytoplasmic segment spans residues 560–637 (QSRSPGHLPK…LPAHHNATRL (78 aa)). A Phosphoserine modification is found at Ser-605. Thr-621 bears the Phosphothreonine mark. Ser-623 is subject to Phosphoserine.

It belongs to the SLC34A transporter family. In terms of assembly, interacts via its C-terminal region with NHERF4. Interacts with NHERF1. Interacts with TMEM174; regulates SLC34A1 internalization by PTH and FGF23. Kidney.

The protein resides in the apical cell membrane. It is found in the cell membrane. The enzyme catalyses 3 Na(+)(out) + phosphate(out) = 3 Na(+)(in) + phosphate(in). Functionally, involved in actively transporting phosphate into cells via Na(+) cotransport in the renal brush border membrane. The cotransport has a Na(+):Pi stoichiometry of 3:1 and is electrogenic. The chain is Sodium-dependent phosphate transport protein 2A from Mus musculus (Mouse).